The chain runs to 291 residues: tRNA dimethylallyltransferase (291 aa).

ATP is bound at residue 9-16 (GPTASGKT). 11–16 (TASGKT) contributes to the substrate binding site. Residues 34–37 (DSLQ) are interaction with substrate tRNA.

The protein belongs to the IPP transferase family. As to quaternary structure, monomer. Requires Mg(2+) as cofactor.

The catalysed reaction is adenosine(37) in tRNA + dimethylallyl diphosphate = N(6)-dimethylallyladenosine(37) in tRNA + diphosphate. Catalyzes the transfer of a dimethylallyl group onto the adenine at position 37 in tRNAs that read codons beginning with uridine, leading to the formation of N6-(dimethylallyl)adenosine (i(6)A). The polypeptide is tRNA dimethylallyltransferase (Onion yellows phytoplasma (strain OY-M)).